A 156-amino-acid polypeptide reads, in one-letter code: Small ribosomal subunit protein uS7 (156 aa).

This sequence belongs to the universal ribosomal protein uS7 family. In terms of assembly, part of the 30S ribosomal subunit. Contacts proteins S9 and S11.

Its function is as follows. One of the primary rRNA binding proteins, it binds directly to 16S rRNA where it nucleates assembly of the head domain of the 30S subunit. Is located at the subunit interface close to the decoding center, probably blocks exit of the E-site tRNA. The protein is Small ribosomal subunit protein uS7 of Rippkaea orientalis (strain PCC 8801 / RF-1) (Cyanothece sp. (strain PCC 8801)).